We begin with the raw amino-acid sequence, 281 residues long: 3-hydroxyanthranilate 3,4-dioxygenase (281 aa).

The domain A (catalytic) stretch occupies residues 1–162 (MAGVTAIEIP…SNEFKTGKPG (162 aa)). Arginine 45 provides a ligand contact to O2. Histidine 49, glutamate 55, and histidine 93 together coordinate Fe cation. Glutamate 55 contacts substrate. Substrate contacts are provided by arginine 97 and glutamate 107. Residues 163-179 (KGTFACNAPYEARWTDL) form a linker region. The interval 180 to 281 (PVPINRKEFI…GFAITIRMPG (102 aa)) is domain B.

It belongs to the 3-HAO family. It depends on Fe(2+) as a cofactor.

The protein resides in the cytoplasm. The catalysed reaction is 3-hydroxyanthranilate + O2 = (2Z,4Z)-2-amino-3-carboxymuconate 6-semialdehyde. Its pathway is cofactor biosynthesis; NAD(+) biosynthesis; quinolinate from L-kynurenine: step 3/3. Catalyzes the oxidative ring opening of 3-hydroxyanthranilate to 2-amino-3-carboxymuconate semialdehyde, which spontaneously cyclizes to quinolinate. This is 3-hydroxyanthranilate 3,4-dioxygenase (haao-1) from Caenorhabditis briggsae.